A 1068-amino-acid chain; its full sequence is Ubiquitin-protein ligase E3B (1068 aa).

Met1 carries the N-acetylmethionine modification. The IQ domain occupies 29 to 58; the sequence is RERAAVVIQAHVRSFLCRSRLQRDIRREID. Ser419 carries the post-translational modification Phosphoserine. Residues 702-1068 form the HECT domain; sequence SQHAMKGVIR…ISMNTGFELS (367 aa). The active-site Glycyl thioester intermediate is Cys1036.

Widely expressed.

It is found in the postsynaptic density. The catalysed reaction is S-ubiquitinyl-[E2 ubiquitin-conjugating enzyme]-L-cysteine + [acceptor protein]-L-lysine = [E2 ubiquitin-conjugating enzyme]-L-cysteine + N(6)-ubiquitinyl-[acceptor protein]-L-lysine.. Its pathway is protein modification; protein ubiquitination. In terms of biological role, E3 ubiquitin-protein ligase which accepts ubiquitin from an E2 ubiquitin-conjugating enzyme in the form of a thioester and then directly transfers the ubiquitin to targeted substrates. Ubiquitinates BCKDK and targets it for degradation, thereby regulating various metabolic processes. Involved in the positive regulation of neurite branching in hippocampal neurons and the control of neuronal spine number and morphology, through the ubiquitination of PPP3CC. The chain is Ubiquitin-protein ligase E3B (UBE3B) from Homo sapiens (Human).